Reading from the N-terminus, the 1358-residue chain is MIPSKYKLAPPDDLHPYSESERAKHKIYPDFDPWKHTKEEDEILLNFVSKGYYSTSKVNFESISARSSLQDSLPKLSSTLSEKFSEVVRIREREINTIKGNSKDGMAASKFTDLCGPDFKLPSRLTLTDHRKELWLQELSSPYTPLHKITSFIPHGLKRRQVLEQCYIKQIPLKRAVWLIKCCYSIEWKTGIAKYANSPQEKDKFNAHLLKEWTDNFVHILEKLIFEMTQHYNDSVKLEAWKTEVSYFLKLVGNCYTLELIDKNTFHFWILQFVSKVENFEYLPLPLHILELFWSGICNTNSTKVNESESNPLYMVTKLTDILLNQYYIILHSKSMINDDKYIINDIKKNNSIKESLLASIQKLICILFKQQSLEVFLFPPTSWEKYKPCLIQITSALYRKSDEVAEIKRKLELISYRNETLKYTPPISENKVKDDLILTTFTENSGSITVVELSQVDTGLTGALDDNATDFDWTSYSDQEISTKIQIIQIILWAIHPSRHSHYEAGQLAAKLLLLKINTMDGFPEYEIEDEIWSLVFKLAKLSDKSKALPAVLEALYSLLNTLIVYGLIKVSTYIRKLISSGILYLTESNDKYIHCRLLINLKMSPLMKSQYNMVLKNVMDQDPEYYNNYNFDQIVSIVEDLKVKLPNGDAIEYSNYPMSVKISLGEWYLTYLCNGKLVNETRESLTEKYVLFAHQLNTNHLYFKWIEFIVYHQLIEDIETLEYLMEVLLRYKKLFSQYINDHVLFIKTFIFIIRRILKERDSIAYSLTSFMDFWKFIMKSYSLEIRADTDLRSEMSAVYEEEKAKKEITEGEKDSWMGLYQNIHPDSTSLDQNHTGFSELFLTNLKTFLSSKQDKQAKKKARYNLLLLMQAKNRDYSKFISIYLKRKDFKTSDLVNLLSSKLLTLDQIKNTYGLKYVLELFDIESESNCVFYEYQKRCYIELNYKSVLSEYNVVSHHEMNRFIFKIVNHSTSAKLKETASALLTKNLEANKDKAIQLFYQLVYYQNNLEFLSSEELQEFAVNNSPQKLYSYLDFTNLWLFQSFTKFYIHETFQNTNEDKVKVGDVIFSIIETTKYNVLCAKIFEDIRDHRVTDLVIELFEQDFFKKIISGEEFKAEFLQMLIEIINHLSMHKGKTNDRSGEQSHTSYELCVQVMAHFQQLSDSELSAKEIELDVFMKIFTVHQNSVFQEILRDTESSSAMIESLFALFERVNFSLRLKLMFYEVLSSLKSYCTYEAGISDEQSRTKLMHKLMCLPPFQVSSFFPEEDDTDCTRDPALSLGLDLGTASANSTSSTTPSEGTHKKRCAIWDKRLHKYTGELQRKPYYCIKNYQDTEDINNCSLNLSLFDARYERNNPR.

Belongs to the Mediator complex subunit 12 family. As to quaternary structure, component of the SRB8-11 complex, which itself associates with the Mediator complex.

The protein localises to the nucleus. Its function is as follows. Component of the SRB8-11 complex. The SRB8-11 complex is a regulatory module of the Mediator complex which is itself involved in regulation of basal and activated RNA polymerase II-dependent transcription. The SRB8-11 complex may be involved in the transcriptional repression of a subset of genes regulated by Mediator. It may inhibit the association of the Mediator complex with RNA polymerase II to form the holoenzyme complex. The polypeptide is Mediator of RNA polymerase II transcription subunit 12 (SRB8) (Candida glabrata (strain ATCC 2001 / BCRC 20586 / JCM 3761 / NBRC 0622 / NRRL Y-65 / CBS 138) (Yeast)).